Here is a 275-residue protein sequence, read N- to C-terminus: Testis-specific gene 13 protein (275 aa).

The span at 1–20 (MSQKRQTKFQNGKSKTSENS) shows a compositional bias: polar residues. A disordered region spans residues 1–28 (MSQKRQTKFQNGKSKTSENSSAKREKGM).

As to expression, testis-specific.

The chain is Testis-specific gene 13 protein (TSGA13) from Homo sapiens (Human).